A 132-amino-acid chain; its full sequence is Agouti-signaling protein (132 aa).

The signal sequence occupies residues 1–22 (MDVTRLLLATLLVFLCFFTVYS). An N-linked (GlcNAc...) asparagine glycan is attached at Asn39. A disordered region spans residues 62–93 (ISRKEAEKKRSSKKEASMKKVAQPRTPLSAPC). Basic and acidic residues predominate over residues 63 to 79 (SRKEAEKKRSSKKEASM). 5 cysteine pairs are disulfide-bonded: Cys93–Cys108, Cys100–Cys114, Cys107–Cys125, Cys111–Cys132, and Cys116–Cys123. Residues 93-132 (CVATRDSCKPPAPACCDPCASCQCRFFRSACSCRVLSLNC) form the Agouti domain.

It localises to the secreted. Its function is as follows. Involved in the regulation of melanogenesis. The binding of ASP to MC1R precludes alpha-MSH initiated signaling and thus blocks production of cAMP, leading to a down-regulation of eumelanogenesis (brown/black pigment) and thus increasing synthesis of pheomelanin (yellow/red pigment). This is Agouti-signaling protein (ASIP) from Trachypithecus auratus (Javan langur).